The chain runs to 268 residues: Protein MSS18 (268 aa).

It to baculovirus occlusion-derived virus envelope protein E27 (ODV-E27).

The protein localises to the mitochondrion. Its function is as follows. Involved in splicing of intron aI5-beta of the mitochondrial COX1 transcript. This is Protein MSS18 (MSS18) from Saccharomyces cerevisiae (strain ATCC 204508 / S288c) (Baker's yeast).